Consider the following 92-residue polypeptide: MGFYMLLTVALLLTSLMNVEATPVDQAERSALEKSGLGNRIQPRYDNCGDAEQTATSQSAWTKKPMMKNVKLPAIMWSQIAFKIKAKTKTKY.

An N-terminal signal peptide occupies residues 1-21 (MGFYMLLTVALLLTSLMNVEA). The propeptide occupies 22–39 (TPVDQAERSALEKSGLGN).

As to expression, expressed by the venom duct.

It is found in the secreted. In Gemmula speciosa (Splendid gem-turris), this protein is Turripeptide UID-02.